The chain runs to 726 residues: MRLLLLLAPLGWLLLAETKGDAKPEDNLLVLTVATKETEGFRRFKRSAQFFNYKIQALGLGEDWPGEAMLAGGGLKVRLLKKALEKHADKENLVILFTDSYDVVFASGPRELLKKFRQARSQVVFSAEELIYPDRRLEAKYPVVSDGKRFLGSGGFIGYAPNLSKLVAEWEGQDSDSDQLFYTKIFLDPEKREQINITLDHRCRIFQNLDGALDEVVLKFEMGQVRARNLAYDTLPVLIHGNGPTKLQLNYLGNYIPRFWTFETGCAVCDEGLRSLKGIGDEALPAVLVGVFIEQPTPFLSLFFQRLLRLHYPQKRLRLFIHNHEQHHKAQVEQFLAEHGDEYQSVKLVGPEVRVANADARNMGADLCRQDRGCTYYFSVDADVALTEPKTLRLLIEQNKNVIAPLMTRHGRLWSNFWGALSADGYYARSEDYVDIVQGRRVGVWNVPYISNIYLIKGSALRAELQETDLFHHSKLDPDMAFCANIRQQDVFMFLTNRHSFGHLLSLDSYQTTHLHNDLWEVFSNPEDWKEKYIHENYTKALAGKMVEMPCPDVYWFPIFTETACDELVEEMEHYGQWSLGDNKDNRIQGGYENVPTIDIHMNQINFEREWHKFLVEYIAPMTEKLYPGYYTRAQFDLAFVVRYKPDEQPSLVPHHDASTFTINIALNRVGVDYEGGGCRFLRYNCSIRAPRKGWTLMHPGRLTHYHEGLPTTKGTRYIAVSFVDP.

The N-terminal stretch at 1–18 is a signal peptide; sequence MRLLLLLAPLGWLLLAET. Asn196 and Asn537 each carry an N-linked (GlcNAc...) asparagine glycan. Residues 635–726 form the Fe2OG dioxygenase domain; it reads QFDLAFVVRY…RYIAVSFVDP (92 aa). Fe cation contacts are provided by His655 and Asp657. Asn685 carries N-linked (GlcNAc...) asparagine glycosylation. Fe cation is bound at residue His707. The active site involves Arg717.

In terms of assembly, homodimer. Identified in a complex with P3H3 and P3H4. Requires Fe(2+) as cofactor. The cofactor is L-ascorbate.

It localises to the rough endoplasmic reticulum membrane. It catalyses the reaction L-lysyl-[collagen] + 2-oxoglutarate + O2 = (5R)-5-hydroxy-L-lysyl-[collagen] + succinate + CO2. In terms of biological role, part of a complex composed of PLOD1, P3H3 and P3H4 that catalyzes hydroxylation of lysine residues in collagen alpha chains and is required for normal assembly and cross-linkling of collagen fibrils. Forms hydroxylysine residues in -Xaa-Lys-Gly- sequences in collagens. These hydroxylysines serve as sites of attachment for carbohydrate units and are essential for the stability of the intermolecular collagen cross-links. In Bos taurus (Bovine), this protein is Procollagen-lysine,2-oxoglutarate 5-dioxygenase 1 (PLOD1).